We begin with the raw amino-acid sequence, 160 residues long: Nucleotide-binding protein VV1636 (160 aa).

The protein belongs to the YajQ family.

In terms of biological role, nucleotide-binding protein. This chain is Nucleotide-binding protein VV1636, found in Vibrio vulnificus (strain YJ016).